A 283-amino-acid polypeptide reads, in one-letter code: Phosphate import ATP-binding protein PstB 2 (283 aa).

The ABC transporter domain maps to 36-278 (LQVKQFNFYY…PKKKQTEDYI (243 aa)). 69–76 (GPSGCGKS) contributes to the ATP binding site.

The protein belongs to the ABC transporter superfamily. Phosphate importer (TC 3.A.1.7) family. The complex is composed of two ATP-binding proteins (PstB), two transmembrane proteins (PstC and PstA) and a solute-binding protein (PstS).

Its subcellular location is the cell inner membrane. It catalyses the reaction phosphate(out) + ATP + H2O = ADP + 2 phosphate(in) + H(+). In terms of biological role, part of the ABC transporter complex PstSACB involved in phosphate import. Responsible for energy coupling to the transport system. In Nitrosococcus oceani (strain ATCC 19707 / BCRC 17464 / JCM 30415 / NCIMB 11848 / C-107), this protein is Phosphate import ATP-binding protein PstB 2.